The chain runs to 158 residues: Protein BTG2 (158 aa).

S147 carries the phosphoserine; by MAPK1 and MAPK3 modification. The residue at position 149 (S149) is a Phosphoserine; by MAPK14.

This sequence belongs to the BTG family. In terms of assembly, interacts with PRKCABP. Interacts with CNOT7 and CNOT8; indicative for an association with the CCR4-NOT complex. Interacts with PIN1, inducing mitochondrial depolarization. Post-translationally, phosphorylated at Ser-147 by MAPK1/ERK2 and MAPK3/ERK1, and at Ser-149 by MAPK14, leading to PIN1-binding and mitochondrial depolarization.

In terms of biological role, anti-proliferative protein; the function is mediated by association with deadenylase subunits of the CCR4-NOT complex. Activates mRNA deadenylation in a CNOT6 and CNOT7-dependent manner. In vitro can inhibit deadenylase activity of CNOT7 and CNOT8. Involved in cell cycle regulation. Could be involved in the growth arrest and differentiation of the neuronal precursors. Modulates transcription regulation mediated by ESR1. Involved in mitochondrial depolarization and neurite outgrowth. The polypeptide is Protein BTG2 (BTG2) (Homo sapiens (Human)).